The following is a 209-amino-acid chain: MTTESTSNKEELSAEQLADDIVQQAEEQVEDQHDHAHEVISAEQEKINELELALATAQSTVADQKDSVIRAKAEVDNIRRRAAQDVEKARKFALEKFAGEMLTSVDNLERALQNIDKEDESNKGVIEGVELTLQGLITSLDKFGVKAVDPQDQPFNPELHQAMSMQEVPGVAPNTVIAVMQKGYELNGRLIRPAMVMVSKAAPTVDATA.

It belongs to the GrpE family. As to quaternary structure, homodimer.

Its subcellular location is the cytoplasm. Its function is as follows. Participates actively in the response to hyperosmotic and heat shock by preventing the aggregation of stress-denatured proteins, in association with DnaK and GrpE. It is the nucleotide exchange factor for DnaK and may function as a thermosensor. Unfolded proteins bind initially to DnaJ; upon interaction with the DnaJ-bound protein, DnaK hydrolyzes its bound ATP, resulting in the formation of a stable complex. GrpE releases ADP from DnaK; ATP binding to DnaK triggers the release of the substrate protein, thus completing the reaction cycle. Several rounds of ATP-dependent interactions between DnaJ, DnaK and GrpE are required for fully efficient folding. The protein is Protein GrpE of Colwellia psychrerythraea (strain 34H / ATCC BAA-681) (Vibrio psychroerythus).